The sequence spans 198 residues: uncharacterized protein (198 aa).

This is an uncharacterized protein from Homo sapiens (Human).